Consider the following 285-residue polypeptide: Elongation factor Ts (285 aa).

The tract at residues 82-85 is involved in Mg(2+) ion dislocation from EF-Tu; that stretch reads TDFV.

Belongs to the EF-Ts family.

It localises to the cytoplasm. Its function is as follows. Associates with the EF-Tu.GDP complex and induces the exchange of GDP to GTP. It remains bound to the aminoacyl-tRNA.EF-Tu.GTP complex up to the GTP hydrolysis stage on the ribosome. This Sodalis glossinidius (strain morsitans) protein is Elongation factor Ts.